We begin with the raw amino-acid sequence, 82 residues long: Delta-conotoxin-like CnVIA (82 aa).

An N-terminal signal peptide occupies residues 1 to 22 (MKLTCMMIVAVLFLTAWTFVTA). A propeptide spanning residues 23–49 (DDSRNGLENLSPKARHEMKNPEASKSN) is cleaved from the precursor. 3 disulfide bridges follow: Cys54–Cys69, Cys61–Cys73, and Cys68–Cys78.

The protein belongs to the conotoxin O1 superfamily. In terms of tissue distribution, expressed by the venom duct.

It is found in the secreted. Functionally, delta-conotoxins bind to site 6 of voltage-gated sodium channels (Nav) and inhibit the inactivation process. This chain is Delta-conotoxin-like CnVIA, found in Conus consors (Singed cone).